Reading from the N-terminus, the 480-residue chain is MPDAFPFDNTYASLPDRFFTRMSPKPVAEPGLIAVNRPLAERLGITLGESDAELAQLFAGNVVPMGAAPLAQVYAGHQFGGWSQQLGDGRAVMLGEVVAPDGARFDVQLKGAGQTPYSRMGDGRAWLGPVLREYIVSEAMAALGIPTTRALAAVTTGEIVLREARMPGAVLTRVAASHIRVGTFQYFAARQDVDALQALLDHTIARHYPDVDGPSGLLDAALQAQADLIAKWMGVGFIHGVMNTDNMTLSGETIDYGPCAFMDTYEANKVFSSIDQFGRYAYAQQPQIAAWNLAQLATALLPLMPDRDAAIEEFTEAVNGFAARFDTAWHGVLRAKLGLVSEQEGDAQLAFDLLNRMEQGGGDFTQVFRALSGPEPERAAEAFAAPAVLAPWLKAWRARLARDNVAKAARIASMQADNPALIPRNHRIEEVIQAAVKGDFAPFERLTTALQDPFTDRPEFADLQATPARSEAVTQTFCGT.

Positions 87, 89, 90, 110, 122, 123, 173, and 180 each coordinate ATP. The active-site Proton acceptor is the Asp245. The Mg(2+) site is built by Asn246 and Asp255. Residue Asp255 coordinates ATP.

The protein belongs to the SELO family. Mg(2+) is required as a cofactor. Requires Mn(2+) as cofactor.

It catalyses the reaction L-seryl-[protein] + ATP = 3-O-(5'-adenylyl)-L-seryl-[protein] + diphosphate. The enzyme catalyses L-threonyl-[protein] + ATP = 3-O-(5'-adenylyl)-L-threonyl-[protein] + diphosphate. The catalysed reaction is L-tyrosyl-[protein] + ATP = O-(5'-adenylyl)-L-tyrosyl-[protein] + diphosphate. It carries out the reaction L-histidyl-[protein] + UTP = N(tele)-(5'-uridylyl)-L-histidyl-[protein] + diphosphate. It catalyses the reaction L-seryl-[protein] + UTP = O-(5'-uridylyl)-L-seryl-[protein] + diphosphate. The enzyme catalyses L-tyrosyl-[protein] + UTP = O-(5'-uridylyl)-L-tyrosyl-[protein] + diphosphate. Nucleotidyltransferase involved in the post-translational modification of proteins. It can catalyze the addition of adenosine monophosphate (AMP) or uridine monophosphate (UMP) to a protein, resulting in modifications known as AMPylation and UMPylation. This Jannaschia sp. (strain CCS1) protein is Protein nucleotidyltransferase YdiU.